Reading from the N-terminus, the 612-residue chain is Transcription factor ffsR (612 aa).

A compositionally biased stretch (polar residues) spans 1 to 12 (MDTLTAPTTQSE). A disordered region spans residues 1–21 (MDTLTAPTTQSEQPPPPLTAS). The zn(2)-C6 fungal-type DNA-binding region spans 28–60 (CDRCRSHKLRCNRDLMTSTNSPCQRCRKARVKC). The span at 73-82 (EELKNGENVH) shows a compositional bias: basic and acidic residues. Disordered stretches follow at residues 73 to 130 (EELK…SMSG), 154 to 249 (DGST…VTSS), and 451 to 470 (GQGP…TTTN). Composition is skewed to polar residues over residues 92–103 (SHRTASTPSNHA), 154–169 (DGST…TNGS), and 238–249 (LTQQHPAGVTSS). Over residues 458 to 470 (PSQGSSSRSTTTN) the composition is skewed to low complexity.

The protein resides in the nucleus. Its function is as follows. Transcription factor that specifically regulates the expression of the gene cluster that mediates the biosynthesis of the cytotoxic leucine-containing cytochalasans, including aspochalasin C, aspochalasin E, TMC-169, flavichalasine F, aspergillin PZ, aspochalasin M and flavichalasine G. The chain is Transcription factor ffsR from Aspergillus flavipes.